The primary structure comprises 528 residues: Transcriptional activator protein UGA3 (528 aa).

Residues Cys17–Cys44 constitute a DNA-binding region (zn(2)-C6 fungal-type). The Nuclear localization signal signature appears at Ser55–Asp62.

In terms of assembly, UGA3 proteins associate in oligomers, at least in the presence of inducer.

It localises to the nucleus. GABA-dependent positive regulation of genes required for catabolism of GABA (UGA4, UGA1, and UGA2). In Saccharomyces cerevisiae (strain ATCC 204508 / S288c) (Baker's yeast), this protein is Transcriptional activator protein UGA3 (UGA3).